The sequence spans 396 residues: Elongation factor Tu (396 aa).

Residues 10–205 (KPHVNIGTIG…AVDESIPDPV (196 aa)) enclose the tr-type G domain. Positions 19–26 (GHVDHGKT) are G1. A GTP-binding site is contributed by 19–26 (GHVDHGKT). A Mg(2+)-binding site is contributed by threonine 26. Positions 62–66 (GITIN) are G2. Residues 83–86 (DAPG) are G3. Residues 83-87 (DAPGH) and 138-141 (NKAD) contribute to the GTP site. Residues 138 to 141 (NKAD) are G4. The interval 175 to 177 (SAL) is G5.

It belongs to the TRAFAC class translation factor GTPase superfamily. Classic translation factor GTPase family. EF-Tu/EF-1A subfamily. In terms of assembly, monomer.

Its subcellular location is the cytoplasm. The enzyme catalyses GTP + H2O = GDP + phosphate + H(+). Its function is as follows. GTP hydrolase that promotes the GTP-dependent binding of aminoacyl-tRNA to the A-site of ribosomes during protein biosynthesis. This chain is Elongation factor Tu, found in Mycobacterium avium (strain 104).